Consider the following 368-residue polypeptide: Tubby-like F-box protein 2 (368 aa).

Residues 1–17 (MVPWRRSSSSSSAPSSR) are compositionally biased toward low complexity. The segment at 1–44 (MVPWRRSSSSSSAPSSRPARRPARTNARVSPDVSSELSPLAGEE) is disordered. The F-box domain maps to 49–104 (ERWSALVPDLLADILRCVEAGSERWPPRRDVVACASVCRRWRDVAVAVVQPPLESG).

This sequence belongs to the TUB family. As to expression, expressed in stems, leaves, flowers and seeds.

In Oryza sativa subsp. japonica (Rice), this protein is Tubby-like F-box protein 2 (TULP2).